We begin with the raw amino-acid sequence, 432 residues long: Glutamate-1-semialdehyde 2,1-aminomutase (432 aa).

The residue at position 272 (K272) is an N6-(pyridoxal phosphate)lysine.

It belongs to the class-III pyridoxal-phosphate-dependent aminotransferase family. HemL subfamily. Homodimer. Pyridoxal 5'-phosphate serves as cofactor.

It localises to the cytoplasm. It carries out the reaction (S)-4-amino-5-oxopentanoate = 5-aminolevulinate. The protein operates within porphyrin-containing compound metabolism; protoporphyrin-IX biosynthesis; 5-aminolevulinate from L-glutamyl-tRNA(Glu): step 2/2. It functions in the pathway porphyrin-containing compound metabolism; chlorophyll biosynthesis. This is Glutamate-1-semialdehyde 2,1-aminomutase from Acaryochloris marina (strain MBIC 11017).